A 173-amino-acid polypeptide reads, in one-letter code: Alpha-crystallin A chain (173 aa).

Methionine 1 is modified (N-acetylmethionine). Positions 52–162 (LFRGFMDSGI…SHSERPIPVS (111 aa)) constitute a sHSP domain. Zn(2+) contacts are provided by histidine 100, glutamate 102, histidine 107, and histidine 154. The interval 146 to 173 (MMSGLDSSHSERPIPVSREEKPTSAPSS) is disordered. Basic and acidic residues predominate over residues 153 to 167 (SHSERPIPVSREEKP).

This sequence belongs to the small heat shock protein (HSP20) family. Heteropolymer composed of three CRYAA and one CRYAB subunits. Inter-subunit bridging via zinc ions enhances stability, which is crucial as there is no protein turn over in the lens. Can also form homodimers and homotetramers (dimers of dimers) which serve as the building blocks of homooligomers. Within homooligomers, the zinc-binding motif is created from residues of 3 different molecules. His-100 and Glu-102 from one molecule are ligands of the zinc ion, and His-107 and His-154 residues from additional molecules complete the site with tetrahedral coordination geometry.

The protein resides in the cytoplasm. It localises to the nucleus. In terms of biological role, contributes to the transparency and refractive index of the lens. May act as a chaperone, preventing aggregation of various proteins under a wide range of stress conditions. The polypeptide is Alpha-crystallin A chain (CRYAA) (Aquarana catesbeiana (American bullfrog)).